The following is a 67-amino-acid chain: DNA-directed RNA polymerase subunit omega (67 aa).

The protein belongs to the RNA polymerase subunit omega family. The RNAP catalytic core consists of 2 alpha, 1 beta, 1 beta' and 1 omega subunit. When a sigma factor is associated with the core the holoenzyme is formed, which can initiate transcription.

The catalysed reaction is RNA(n) + a ribonucleoside 5'-triphosphate = RNA(n+1) + diphosphate. Promotes RNA polymerase assembly. Latches the N- and C-terminal regions of the beta' subunit thereby facilitating its interaction with the beta and alpha subunits. This chain is DNA-directed RNA polymerase subunit omega, found in Leptothrix cholodnii (strain ATCC 51168 / LMG 8142 / SP-6) (Leptothrix discophora (strain SP-6)).